The following is a 539-amino-acid chain: Sorting nexin-27 (539 aa).

Positions 1–40 are disordered; that stretch reads MADEDGEGIHPSAPHRNGGGGGGSGLHCAGNGGGGGGGPR. Positions 17–39 are enriched in gly residues; that stretch reads NGGGGGGSGLHCAGNGGGGGGGP. The PDZ domain maps to 41–134; that stretch reads VVRIVKSESG…ELILTVLSVP (94 aa). Phosphoserine is present on residues S49 and S60. The PX domain occupies 159 to 267; that stretch reads QAVPISVPTY…EFLSESDENY (109 aa). Residues 271–360 form the Ras-associating domain; that stretch reads SDVELRVALP…TCLTIRKWLF (90 aa). The interval 271-360 is FERM-like region F1; that stretch reads SDVELRVALP…TCLTIRKWLF (90 aa). Residues 371–419 form an FERM-like region F2 region; it reads NDLAVTYFFHQAVDDVKKGYIKAEEKSYQLQKLHEQRKMVMYLNMLRTC. An FERM-like region F3 region spans residues 423-523; that stretch reads NEIIFPHCAC…RVFCELKWRK (101 aa).

Core component of the SNX27-retromer, a multiprotein complex composed of SNX27, the WASH complex and the retromer complex. Interacts (via the FERM-like regions) with the WASH complex. Interacts with SNX1. Interacts with CYTIP. Interacts with DGKZ. Interacts with MCC. Interacts (via PDZ domain) with a number of target transmembrane proteins (via PDZ-binding motif): ABCC4, ADRB2, ARHGEF7, GRIA1, GRIA2, GRIN1, GRIN2A GRIN2C, KCNJ6, KCNJ9 and SLC2A1/GLUT1. Interacts (via PDZ domains) with SLC9A3; directs SLC9A3 membrane insertion from early endosomes to the plasma membrane. In terms of tissue distribution, expressed in cells of hematopoietic origin.

It localises to the early endosome membrane. Its subcellular location is the cytoplasm. The protein resides in the cytosol. Involved in the retrograde transport from endosome to plasma membrane, a trafficking pathway that promotes the recycling of internalized transmembrane proteins. Following internalization, endocytosed transmembrane proteins are delivered to early endosomes and recycled to the plasma membrane instead of being degraded in lysosomes. SNX27 specifically binds and directs sorting of a subset of transmembrane proteins containing a PDZ-binding motif at the C-terminus: following interaction with target transmembrane proteins, associates with the retromer complex, preventing entry into the lysosomal pathway, and promotes retromer-tubule based plasma membrane recycling. SNX27 also binds with the WASH complex. Interacts with membranes containing phosphatidylinositol-3-phosphate (PtdIns(3P)). May participate in establishment of natural killer cell polarity. Recruits CYTIP to early endosomes. This is Sorting nexin-27 (Snx27) from Mus musculus (Mouse).